The chain runs to 139 residues: MKKEKKTPTPLPSHHVLFAEPGFFLCNFFFVLLKHTQINPFFYFLFILLFIIYIAIIYFVFIRISHFSFSLCRQCNSLGRMIFMCAYLPAASSRSVANPALPPQKKKKKKKKGTLRTGEVEEQAKGNISFDLCGKQNFQ.

2 helical membrane passes run Ser13–Leu33 and Phe42–Ile62. The interval Arg94–Glu121 is disordered. Residues Gln104–Thr114 are compositionally biased toward basic residues.

The protein localises to the membrane. In terms of biological role, may be involved in telomere capping. The polypeptide is Maintenance of telomere capping protein 7 (MTC7) (Saccharomyces cerevisiae (strain ATCC 204508 / S288c) (Baker's yeast)).